The primary structure comprises 849 residues: Putative pentatricopeptide repeat-containing protein At5g08490 (849 aa).

PPR repeat units lie at residues 20-54 (DHRV…GHIA), 55-89 (CSEV…DPVV), 121-155 (SSVT…GLEK), 156-187 (DTLV…IADK), 188-222 (DVVS…PTEP), 223-260 (NYAT…SWLQ), 262-296 (HVFV…DLVS), 297-327 (WNVV…GDVS), 329-363 (DSVT…SYLL), 365-399 (DTSV…DIIS), 400-430 (WNAI…AITL), 431-465 (DSVT…GLLH), 469-499 (EPKL…LSER), 501-531 (TLVS…MSTT), 532-566 (DLTT…GMRP), 567-597 (NTVT…IIRG), 601-631 (DIRL…DARR), 632-666 (DLVM…NIKP), 667-702 (DHVF…GMKP), and 703-733 (TMEQ…MPVE). Residues 738–813 (IWGTLLRACT…PAGCSWLEVD (76 aa)) form a type E motif region. The type E(+) motif stretch occupies residues 814–844 (GQRNVFVSGDCSHPRRDSIFDLVNALYLQMK).

It belongs to the PPR family. PCMP-E subfamily.

In Arabidopsis thaliana (Mouse-ear cress), this protein is Putative pentatricopeptide repeat-containing protein At5g08490 (PCMP-E32).